A 61-amino-acid polypeptide reads, in one-letter code: Short neurotoxin 2 (61 aa).

4 disulfides stabilise this stretch: cysteine 3-cysteine 23, cysteine 17-cysteine 40, cysteine 42-cysteine 53, and cysteine 54-cysteine 59.

Belongs to the three-finger toxin family. Short-chain subfamily. Type I alpha-neurotoxin sub-subfamily. Expressed by the venom gland.

It localises to the secreted. Binds to muscle nicotinic acetylcholine receptor (nAChR) and inhibit acetylcholine from binding to the receptor, thereby impairing neuromuscular transmission. The chain is Short neurotoxin 2 from Naja haje haje (Egyptian cobra).